A 266-amino-acid chain; its full sequence is Protein crossbronx-like (266 aa).

The UBC core domain maps to 15 to 178; the sequence is KQGYHILAEY…VQEQAILSRN (164 aa). The segment at 226 to 266 is disordered; it reads SEYLGHIDSSRQMDEEETNQLEKLHRGRIPEPQREEAEVSL. Positions 245–266 are enriched in basic and acidic residues; that stretch reads QLEKLHRGRIPEPQREEAEVSL.

It belongs to the ubiquitin-conjugating enzyme family. FTS subfamily.

The sequence is that of Protein crossbronx-like from Drosophila sechellia (Fruit fly).